A 378-amino-acid polypeptide reads, in one-letter code: Rhodopsin (378 aa).

Over 1–53 the chain is Extracellular; it reads MMSIASGPSHAAYTWTAQGGGFGNQTVVDKVPPEMLHLVDAHWYQFPPMNPLW. The N-linked (GlcNAc...) asparagine glycan is linked to asparagine 24. The helical transmembrane segment at 54–78 threads the bilayer; that stretch reads HAILGFVIGILGMISVIGNGMVIYI. The Cytoplasmic segment spans residues 79-90; the sequence is FTTTKSLRTPSN. A helical membrane pass occupies residues 91–115; sequence LLVINLAISDFLMMLSMSPAMVINC. Residues 116–130 lie on the Extracellular side of the membrane; that stretch reads YYETWVLGPLVCELY. Cysteine 127 and cysteine 204 are oxidised to a cystine. A helical transmembrane segment spans residues 131–150; it reads GLTGSLFGCGSIWTMTMIAF. Topologically, residues 151–169 are cytoplasmic; sequence DRYNVIVKGLSAKPMTING. A helical membrane pass occupies residues 170–193; that stretch reads ALLRILGIWFFSLGWTIAPMFGWN. At 194-217 the chain is on the extracellular side; that stretch reads RYVPEGNMTACGTDYLTKDLLSRS. N-linked (GlcNAc...) asparagine glycosylation is present at asparagine 200. A helical transmembrane segment spans residues 218-245; it reads YILVYSFFCYFLPLFLIIYSYFFIIQAV. Over 246 to 280 the chain is Cytoplasmic; it reads AAHEKNMREQAKKMNVASLRSAENQSTSAECKLAK. Residues 281-304 traverse the membrane as a helical segment; the sequence is VALMTISLWFMAWTPYLVINYAGI. The Extracellular segment spans residues 305–311; sequence FETVKIN. Residues 312-336 form a helical membrane-spanning segment; the sequence is PLFTIWGSLFAKANAVYNPIVYGIS. At lysine 323 the chain carries N6-(retinylidene)lysine. Over 337-378 the chain is Cytoplasmic; that stretch reads HPKYRAALFQRFPSLACSSGPAGADTLSTTTTVTEGTEKPAA. Positions 356–378 are disordered; that stretch reads GPAGADTLSTTTTVTEGTEKPAA. Low complexity predominate over residues 362–371; sequence TLSTTTTVTE.

Belongs to the G-protein coupled receptor 1 family. Opsin subfamily. Post-translationally, phosphorylated on some or all of the serine and threonine residues present in the C-terminal region.

Its subcellular location is the membrane. Its function is as follows. Visual pigments are the light-absorbing molecules that mediate vision. They consist of an apoprotein, opsin, covalently linked to cis-retinal. This chain is Rhodopsin, found in Cataglyphis bombycina (Saharan silver ant).